A 178-amino-acid polypeptide reads, in one-letter code: Fatty-acid and retinol-binding protein 1 (178 aa).

A signal peptide spans 1–16; sequence MYHRLILLALVGTTMA. 2 coiled-coil regions span residues 67–89 and 130–153; these read DAAL…ELRN and KQAA…ELKV.

The protein belongs to the fatty-acid and retinol-binding protein (FARBP) family. Post-translationally, not glycosylated.

The protein localises to the secreted. Functionally, binds retinol and different fatty acids. The chain is Fatty-acid and retinol-binding protein 1 from Brugia pahangi (Filarial nematode worm).